Consider the following 100-residue polypeptide: Large ribosomal subunit protein uL23 (100 aa).

Belongs to the universal ribosomal protein uL23 family. In terms of assembly, part of the 50S ribosomal subunit. Contacts protein L29, and trigger factor when it is bound to the ribosome.

One of the early assembly proteins it binds 23S rRNA. One of the proteins that surrounds the polypeptide exit tunnel on the outside of the ribosome. Forms the main docking site for trigger factor binding to the ribosome. This Mycolicibacterium smegmatis (strain ATCC 700084 / mc(2)155) (Mycobacterium smegmatis) protein is Large ribosomal subunit protein uL23.